Reading from the N-terminus, the 509-residue chain is Ribonuclease Y (509 aa).

Residues 1 to 21 form a helical membrane-spanning segment; that stretch reads MIILVAVVTAVISFGLGYVVA. Residues 199–259 enclose the KH domain; it reads TVSTVSLPSD…IRREIARLTL (61 aa). Residues 325–418 form the HD domain; that stretch reads VLDHSIEVAQ…VAAADALSAA (94 aa).

This sequence belongs to the RNase Y family.

Its subcellular location is the cell membrane. Its function is as follows. Endoribonuclease that initiates mRNA decay. The chain is Ribonuclease Y from Pseudothermotoga lettingae (strain ATCC BAA-301 / DSM 14385 / NBRC 107922 / TMO) (Thermotoga lettingae).